The chain runs to 804 residues: Phenylalanine--tRNA ligase beta subunit (804 aa).

The tRNA-binding domain occupies 39 to 155 (AEGLKKIVVG…ADVKPGEEVY (117 aa)). The B5 domain occupies 408-483 (RNPSVVKTTV…RIYGYDNLKS (76 aa)). Mg(2+) contacts are provided by aspartate 461, aspartate 467, glutamate 470, and glutamate 471. Residues 711-804 (PKFPAIERDL…LKESLKIKVR (94 aa)) enclose the FDX-ACB domain.

It belongs to the phenylalanyl-tRNA synthetase beta subunit family. Type 1 subfamily. Tetramer of two alpha and two beta subunits. The cofactor is Mg(2+).

It is found in the cytoplasm. It catalyses the reaction tRNA(Phe) + L-phenylalanine + ATP = L-phenylalanyl-tRNA(Phe) + AMP + diphosphate + H(+). This is Phenylalanine--tRNA ligase beta subunit from Lactobacillus johnsonii (strain CNCM I-12250 / La1 / NCC 533).